Reading from the N-terminus, the 473-residue chain is Putative F-box/LRR-repeat protein At3g59170 (473 aa).

The F-box domain maps to 6–54; the sequence is KDMINVLPDALLCHILSFLTTKEAASTSLLSRRWRYLLAFVPNLEFDDS. 5 LRR repeats span residues 168-194, 196-221, 229-254, 333-364, and 365-390; these read TIKIRDGPFIDVKHVHLPKLKTLYLQS, MFDENDIGFRKLLSGCPVLEELVLDG, SFTVSVATLKRLTFCCQKMSSFGYMH, VLYLSPETLEVLTYCCKQIPIFENLSHLTIKS, and DPNVGWKPLTKLLKNSPKLETLVFQG.

The chain is Putative F-box/LRR-repeat protein At3g59170 from Arabidopsis thaliana (Mouse-ear cress).